The sequence spans 444 residues: Forkhead box protein F2 (444 aa).

Residues P32–P98 are disordered. Residues A34 to S75 are compositionally biased toward low complexity. A compositionally biased stretch (gly residues) spans A76–G87. Positions E99–R190 form a DNA-binding region, fork-head. Disordered stretches follow at residues G256–M323 and A338–L367. The segment covering A263–P274 has biased composition (basic residues). Residues G293–Y308 are compositionally biased toward gly residues. Residues G309 to M323 are compositionally biased toward low complexity.

In terms of assembly, interacts with the transcription factors TBP and TFIIB. As to expression, lung and placenta. Predominantly expressed in gastrointestinal tract including stomach.

Its subcellular location is the nucleus. Functionally, probable transcription activator for a number of lung-specific genes. Mediates up-regulation of the E3 ligase IRF2BPL and drives ubiquitination and degradation of CTNNB1. This is Forkhead box protein F2 (FOXF2) from Homo sapiens (Human).